Here is a 204-residue protein sequence, read N- to C-terminus: Wound-induced proteinase inhibitor 2 (204 aa).

The signal sequence occupies residues 1 to 25; the sequence is MAVPKEVSFLASLLVLGILLLHVDA. Repeat copies occupy residues 25–67, 68–125, and 126–183. 6 cysteine pairs are disulfide-bonded: Cys28-Cys100, Cys38-Cys75, Cys41-Cys59, Cys42-Cys71, Cys48-Cys84, and Cys99-Cys117. The 4; truncated repeat unit spans residues 184–204; that stretch reads PKACPKNCDPNIAYSLCLYEK.

It belongs to the protease inhibitor I20 (potato type II proteinase inhibitor) family.

The polypeptide is Wound-induced proteinase inhibitor 2 (PIN2) (Capsicum annuum (Capsicum pepper)).